A 117-amino-acid polypeptide reads, in one-letter code: Fluoride-specific ion channel FluC 2 (117 aa).

A run of 2 helical transmembrane segments spans residues 1–21 (MISIILVMIGGGFGAITRSAI) and 46–66 (FLIGLNIGLSISISWFPAFFV). Gly-71 and Thr-74 together coordinate Na(+). A helical transmembrane segment spans residues 95–115 (LFLNYSLLQFIIGFIACYIGY).

It belongs to the fluoride channel Fluc/FEX (TC 1.A.43) family.

It localises to the cell membrane. It catalyses the reaction fluoride(in) = fluoride(out). With respect to regulation, na(+) is not transported, but it plays an essential structural role and its presence is essential for fluoride channel function. Functionally, fluoride-specific ion channel. Important for reducing fluoride concentration in the cell, thus reducing its toxicity. In Staphylococcus aureus (strain MSSA476), this protein is Fluoride-specific ion channel FluC 2.